The primary structure comprises 106 residues: Glycine/glutamate-rich protein sgp1 (106 aa).

A signal peptide spans 1–20; that stretch reads MKYSLIFILTLACLIASSLA. Residues 20–66 form a disordered region; that stretch reads ARPEGEEKPADDAAGDKKEEGAEGDKTAAGGDEGFTGGDGKNAGGAG. The segment covering 22-45 has biased composition (basic and acidic residues); sequence PEGEEKPADDAAGDKKEEGAEGDK. Positions 50–66 are enriched in gly residues; it reads GDEGFTGGDGKNAGGAG.

It localises to the secreted. The sequence is that of Glycine/glutamate-rich protein sgp1 (sgp1) from Glossina morsitans morsitans (Savannah tsetse fly).